We begin with the raw amino-acid sequence, 617 residues long: Proline--tRNA ligase (617 aa).

It belongs to the class-II aminoacyl-tRNA synthetase family. ProS type 1 subfamily. Homodimer.

Its subcellular location is the cytoplasm. The enzyme catalyses tRNA(Pro) + L-proline + ATP = L-prolyl-tRNA(Pro) + AMP + diphosphate. In terms of biological role, catalyzes the attachment of proline to tRNA(Pro) in a two-step reaction: proline is first activated by ATP to form Pro-AMP and then transferred to the acceptor end of tRNA(Pro). As ProRS can inadvertently accommodate and process non-cognate amino acids such as alanine and cysteine, to avoid such errors it has two additional distinct editing activities against alanine. One activity is designated as 'pretransfer' editing and involves the tRNA(Pro)-independent hydrolysis of activated Ala-AMP. The other activity is designated 'posttransfer' editing and involves deacylation of mischarged Ala-tRNA(Pro). The misacylated Cys-tRNA(Pro) is not edited by ProRS. The protein is Proline--tRNA ligase of Streptococcus agalactiae serotype III (strain NEM316).